The following is a 203-amino-acid chain: Thymidylate kinase (203 aa).

ATP is bound at residue 10-17; the sequence is GIDGSGKS.

Belongs to the thymidylate kinase family.

It catalyses the reaction dTMP + ATP = dTDP + ADP. Functionally, phosphorylation of dTMP to form dTDP in both de novo and salvage pathways of dTTP synthesis. This Brachyspira hyodysenteriae (strain ATCC 49526 / WA1) protein is Thymidylate kinase.